The following is a 514-amino-acid chain: Probable cytochrome P450 6w1 (514 aa).

Residue Cys-450 coordinates heme.

Belongs to the cytochrome P450 family. The cofactor is heme.

The protein localises to the endoplasmic reticulum membrane. It is found in the microsome membrane. In terms of biological role, may be involved in the metabolism of insect hormones and in the breakdown of synthetic insecticides. The chain is Probable cytochrome P450 6w1 (Cyp6w1) from Drosophila melanogaster (Fruit fly).